Here is a 161-residue protein sequence, read N- to C-terminus: Ribonuclease H (161 aa).

The RNase H type-1 domain maps to 5 to 149; the sequence is EKLAIAAATD…VDAIAVAFSK (145 aa). Mg(2+) is bound by residues Asp14, Glu53, Asp78, and Asp141.

It belongs to the RNase H family. As to quaternary structure, monomer. It depends on Mg(2+) as a cofactor.

Its subcellular location is the cytoplasm. The catalysed reaction is Endonucleolytic cleavage to 5'-phosphomonoester.. In terms of biological role, endonuclease that specifically degrades the RNA of RNA-DNA hybrids. In Prochlorococcus marinus (strain NATL2A), this protein is Ribonuclease H.